The chain runs to 216 residues: Pyrophosphatase PpaX (216 aa).

Residue Asp-9 is the Nucleophile of the active site.

The protein belongs to the HAD-like hydrolase superfamily. PpaX family. It depends on Mg(2+) as a cofactor.

The catalysed reaction is diphosphate + H2O = 2 phosphate + H(+). In terms of biological role, hydrolyzes pyrophosphate formed during P-Ser-HPr dephosphorylation by HPrK/P. Might play a role in controlling the intracellular pyrophosphate pool. This Bacillus cereus (strain AH820) protein is Pyrophosphatase PpaX.